The sequence spans 186 residues: RNA polymerase sigma factor NccH (186 aa).

The Polymerase core binding signature appears at 49–62 (DIVQDTFIAAWHAL). The segment at residues 152-171 (HPEAAMALGTSAKAVESRVA) is a DNA-binding region (H-T-H motif).

Belongs to the sigma-70 factor family. ECF subfamily.

Functionally, sigma factors are initiation factors that promote the attachment of RNA polymerase to specific initiation sites and are then released. This sigma factor regulates the genes for a membrane-located efflux system that confers resistance to nickel, cobalt and cadmium. In Alcaligenes xylosoxydans xylosoxydans (Achromobacter xylosoxidans), this protein is RNA polymerase sigma factor NccH (nccH).